We begin with the raw amino-acid sequence, 249 residues long: Ribosomal RNA small subunit methyltransferase J (249 aa).

Residues 97 to 98 (RD), 113 to 114 (ER), and Asp167 each bind S-adenosyl-L-methionine.

This sequence belongs to the methyltransferase superfamily. RsmJ family.

Its subcellular location is the cytoplasm. It carries out the reaction guanosine(1516) in 16S rRNA + S-adenosyl-L-methionine = N(2)-methylguanosine(1516) in 16S rRNA + S-adenosyl-L-homocysteine + H(+). Its function is as follows. Specifically methylates the guanosine in position 1516 of 16S rRNA. This Aeromonas salmonicida (strain A449) protein is Ribosomal RNA small subunit methyltransferase J.